The following is a 510-amino-acid chain: MKDILEQLEDRRAAARLGGGQKRIDAQHGRGKLTARERVDLLLDEGSFEEFDMFVTHRCTDFNMQDQKPAGDGVVTGWGTINGRVVYVFSQDFTVLGGSVSETHSKKICKIMDMAMQNGAPVIGINDSGGARIQEGVDSLAGYGEVFQRNIMASGVVPQISMIMGPCAGGAVYSPAMTDFIFMVKDSSYMFVTGPDVVKTVTNEQVSAEELGGATTHTRKSSVADAAFENDVEALAEVRRLVDFLPLNNREKPPVRPFFDDPDRIEPSLDTLVPDNPNTPYDMKELIHKLADEGDFYEIQEEFAKNIITGFIRLEGRTVGVVANQPLVLAGCLDIDSSRKAARFVRFCDAFEIPLLTLIDVPGFLPGTSQEYGGVIKHGAKLLYAYGEATVPMVTVITRKAYGGAYVVMSSKHLRADFNYAWPTAEVAVMGAKGATEIIHRGDLGDPEKIAQHTADYEERFANPFVASERGFVDEVIQPRSTRKRVARAFASLRNKSVQMPWKKHDNIPL.

Residues 1-257 (MKDILEQLED…NNREKPPVRP (257 aa)) enclose the CoA carboxyltransferase N-terminal domain. Positions 1-504 (MKDILEQLED…NKSVQMPWKK (504 aa)) are carboxyltransferase. The 244-residue stretch at 261 to 504 (DPDRIEPSLD…NKSVQMPWKK (244 aa)) folds into the CoA carboxyltransferase C-terminal domain. Positions 292-325 (DEGDFYEIQEEFAKNIITGFIRLEGRTVGVVANQ) are acyl-CoA binding.

The protein belongs to the AccD/PCCB family. In terms of assembly, the holoenzyme is a dodecamer composed of 6 PccA/alpha subunits and 6 PccB/beta subunits.

It carries out the reaction propanoyl-CoA + hydrogencarbonate + ATP = (S)-methylmalonyl-CoA + ADP + phosphate + H(+). It functions in the pathway metabolic intermediate metabolism; propanoyl-CoA degradation; succinyl-CoA from propanoyl-CoA: step 1/3. Its function is as follows. This is one of the 2 subunits of the biotin-dependent propionyl-CoA carboxylase (PCC), the enzyme catalyzing the carboxylation of propionyl-CoA/propanoyl-CoA to D-methylmalonyl-CoA/(S)-methylmalonyl-CoA. Within the holoenzyme, the alpha subunit catalyzes the ATP-dependent carboxylation of the biotin carried by the biotin carboxyl carrier (BCC) domain, while the beta subunit then tranfers the carboxyl group from carboxylated biotin to propionyl-CoA. The protein is Propionyl-CoA carboxylase beta chain of Roseobacter denitrificans (strain ATCC 33942 / OCh 114) (Erythrobacter sp. (strain OCh 114)).